Here is a 324-residue protein sequence, read N- to C-terminus: Acetyl-coenzyme A carboxylase carboxyl transferase subunit alpha (324 aa).

The region spanning 44-297 (LEERAKQLRY…KAALLRNLAE (254 aa)) is the CoA carboxyltransferase C-terminal domain.

It belongs to the AccA family. Acetyl-CoA carboxylase is a heterohexamer composed of biotin carboxyl carrier protein (AccB), biotin carboxylase (AccC) and two subunits each of ACCase subunit alpha (AccA) and ACCase subunit beta (AccD).

The protein resides in the cytoplasm. It catalyses the reaction N(6)-carboxybiotinyl-L-lysyl-[protein] + acetyl-CoA = N(6)-biotinyl-L-lysyl-[protein] + malonyl-CoA. Its pathway is lipid metabolism; malonyl-CoA biosynthesis; malonyl-CoA from acetyl-CoA: step 1/1. Component of the acetyl coenzyme A carboxylase (ACC) complex. First, biotin carboxylase catalyzes the carboxylation of biotin on its carrier protein (BCCP) and then the CO(2) group is transferred by the carboxyltransferase to acetyl-CoA to form malonyl-CoA. The polypeptide is Acetyl-coenzyme A carboxylase carboxyl transferase subunit alpha (Thermosynechococcus vestitus (strain NIES-2133 / IAM M-273 / BP-1)).